We begin with the raw amino-acid sequence, 65 residues long: Metallothionein-3 (65 aa).

Residue Met1 is modified to N-acetylmethionine. The tract at residues 1 to 30 is beta; that stretch reads MDPEACPCPTGGSCTCSDSCKCEGCTCASS. Residues Cys6, Cys8, Cys14, Cys16, Cys20, Cys22, Cys25, and Cys27 each coordinate a divalent metal cation. The alpha stretch occupies residues 31-65; sequence KKSCCPAECEKCAKDCVCKGGEGAEAEEKKCGCCQ. Residue Ser33 is modified to Phosphoserine. Residues Cys34, Cys35, Cys39, Cys42, Cys46, Cys48, Cys61, Cys63, and Cys64 each contribute to the a divalent metal cation site.

This sequence belongs to the metallothionein superfamily. Type 1 family.

Functionally, binds heavy metals. Contains five zinc and one copper atoms per polypeptide chain and only a negligible amount of cadmium. The sequence is that of Metallothionein-3 (MT3) from Ovis aries (Sheep).